The sequence spans 221 residues: PKHD-type hydroxylase P9515_13321 (221 aa).

The region spanning 80-174 is the Fe2OG dioxygenase domain; the sequence is TIHGIMFTKS…RLVCVGWIES (95 aa). H98, D100, and H155 together coordinate Fe cation. R165 lines the 2-oxoglutarate pocket.

It depends on Fe(2+) as a cofactor. L-ascorbate serves as cofactor.

The chain is PKHD-type hydroxylase P9515_13321 from Prochlorococcus marinus (strain MIT 9515).